We begin with the raw amino-acid sequence, 136 residues long: Snaclec rhodocytin subunit alpha (136 aa).

Intrachain disulfides connect Cys5-Cys16, Cys33-Cys131, and Cys106-Cys123. The region spanning 12 to 132 is the C-type lectin domain; sequence YDQHCYQAFN…CEQMHAFVCK (121 aa).

The protein belongs to the snaclec family. Dimer (non-covalently linked) of heterodimers of subunits alpha and beta (disulfide-linked). As to expression, expressed by the venom gland.

It localises to the secreted. Its function is as follows. Elicits platelet aggregation by the binding to the C-type lectin domain family 1 member B (CLEC1B/CLEC2). Binding leads to tyrosine phosphorylation in the cytoplasmic tail of CLEC1B, which promotes the binding of spleen tyrosine kinase (Syk), subsequent activation of PLC-gamma-2, and platelet activation and aggregation. Binding to GPIbalpha (GP1BA) and alpha-2/beta-1 (ITGA2/ITGB1) may also induce aggregation, but this is controversial. The chain is Snaclec rhodocytin subunit alpha from Calloselasma rhodostoma (Malayan pit viper).